Consider the following 153-residue polypeptide: Superoxide dismutase [Cu-Zn] (153 aa).

Positions 45, 47, and 62 each coordinate Cu cation. Cys56 and Cys145 are disulfide-bonded. His62, His70, His79, and Asp82 together coordinate Zn(2+). Residue His119 coordinates Cu cation.

The protein belongs to the Cu-Zn superoxide dismutase family. As to quaternary structure, homodimer. Cu cation serves as cofactor. The cofactor is Zn(2+).

The protein localises to the cytoplasm. The enzyme catalyses 2 superoxide + 2 H(+) = H2O2 + O2. Functionally, destroys radicals which are normally produced within the cells and which are toxic to biological systems. The chain is Superoxide dismutase [Cu-Zn] (SOD) from Schistosoma mansoni (Blood fluke).